Consider the following 46-residue polypeptide: MTPQGNKPSCHDVITNAWRPTATDSAAGRAPGYGVITNIINGGLDC.

The protein belongs to the glycosyl hydrolase 19 family. Chitinase class I subfamily.

The catalysed reaction is Random endo-hydrolysis of N-acetyl-beta-D-glucosaminide (1-&gt;4)-beta-linkages in chitin and chitodextrins.. In terms of biological role, defense against chitin-containing fungal and bacterial pathogens. The polypeptide is Endochitinase 4 (Arachis hypogaea (Peanut)).